The following is a 192-amino-acid chain: Sarcoplasmic calcium-binding protein, alpha-B and -A chains (192 aa).

N-acetylalanine is present on Ala1. 4 consecutive EF-hand domains span residues Trp4–Ile39, Ile56–Gly91, Ala100–Phe135, and Ala136–Phe171. Residues Asp17, Asp19, Asp21, Asp28, Asp69, Asn71, Asp73, Glu75, Glu80, Asp113, Asn115, Asp117, Lys119, and Glu124 each coordinate Ca(2+).

As to quaternary structure, SCPs from crayfish, lobster, and shrimp are polymorphic dimers; three isotypes (alpha-alpha, alpha-beta, and beta-beta) have been identified.

In terms of biological role, like parvalbumins, SCPs seem to be more abundant in fast contracting muscles, but no functional relationship can be established from this distribution. The protein is Sarcoplasmic calcium-binding protein, alpha-B and -A chains of Penaeus sp. (Penoeid shrimp).